Here is a 435-residue protein sequence, read N- to C-terminus: Serine--tRNA ligase (435 aa).

237 to 239 (TAE) provides a ligand contact to L-serine. 268-270 (RSE) is an ATP binding site. Glu-291 is a binding site for L-serine. 355 to 358 (EISS) contacts ATP. Ser-390 contacts L-serine.

This sequence belongs to the class-II aminoacyl-tRNA synthetase family. Type-1 seryl-tRNA synthetase subfamily. Homodimer. The tRNA molecule binds across the dimer.

It is found in the cytoplasm. The catalysed reaction is tRNA(Ser) + L-serine + ATP = L-seryl-tRNA(Ser) + AMP + diphosphate + H(+). It carries out the reaction tRNA(Sec) + L-serine + ATP = L-seryl-tRNA(Sec) + AMP + diphosphate + H(+). It functions in the pathway aminoacyl-tRNA biosynthesis; selenocysteinyl-tRNA(Sec) biosynthesis; L-seryl-tRNA(Sec) from L-serine and tRNA(Sec): step 1/1. Catalyzes the attachment of serine to tRNA(Ser). Is also able to aminoacylate tRNA(Sec) with serine, to form the misacylated tRNA L-seryl-tRNA(Sec), which will be further converted into selenocysteinyl-tRNA(Sec). The sequence is that of Serine--tRNA ligase from Lactobacillus delbrueckii subsp. bulgaricus (strain ATCC BAA-365 / Lb-18).